The following is a 228-amino-acid chain: Cytidylate kinase (228 aa).

12–20 (GPSGSGKGT) contacts ATP.

This sequence belongs to the cytidylate kinase family. Type 1 subfamily.

The protein localises to the cytoplasm. It carries out the reaction CMP + ATP = CDP + ADP. The enzyme catalyses dCMP + ATP = dCDP + ADP. The protein is Cytidylate kinase of Pseudomonas putida (strain W619).